Consider the following 246-residue polypeptide: uncharacterized protein (246 aa).

The first 24 residues, 1 to 24, serve as a signal peptide directing secretion; that stretch reads MGAPLRHCLLVAAALSLGCGVAAA. A run of 2 helical transmembrane segments spans residues 71-91 and 104-124; these read YYLG…IGLV and FTCA…AGGA.

It localises to the cell membrane. This is an uncharacterized protein from Mycobacterium tuberculosis (strain ATCC 25618 / H37Rv).